The primary structure comprises 183 residues: Protein vem-1 (183 aa).

A helical transmembrane segment spans residues 9–29; the sequence is FTMYDAVFLVVVLGFFFYWLT. A Cytochrome b5 heme-binding domain is found at 47–146; the sequence is MSDMTVEELR…FKYLTVGRLV (100 aa).

The protein belongs to the cytochrome b5 family. MAPR subfamily. Interacts with unc-40 (via cytoplasmic domain). As to expression, expressed in the AVG pioneer midline neuron and in several nerve ring neurons that extend projecting axons into the right ventral nerve cord.

The protein resides in the membrane. The protein localises to the cell projection. Its subcellular location is the axon. Transmembrane protein required for the axon guidance of a subset of ventral nerve cord-associated interneurons and motor neurons. May function with the netrin receptor unc-40 in axon guidance. In Caenorhabditis elegans, this protein is Protein vem-1.